Consider the following 285-residue polypeptide: CCR4-NOT transcription complex subunit 7 (285 aa).

Residues Asp40, Glu42, Asp161, Asp230, and Glu278 each coordinate a divalent metal cation.

This sequence belongs to the CAF1 family. As to quaternary structure, component of the CCR4-NOT complex. Mn(2+) is required as a cofactor. Mg(2+) serves as cofactor. The cofactor is Co(2+).

The protein resides in the nucleus. Its subcellular location is the cytoplasm. The enzyme catalyses Exonucleolytic cleavage of poly(A) to 5'-AMP.. In terms of biological role, has 3'-5' poly(A) exoribonuclease activity for synthetic poly(A) RNA substrate. Catalytic component of the CCR4-NOT complex which is one of the major cellular mRNA deadenylases and is linked to various cellular processes including bulk mRNA degradation, miRNA-mediated repression, translational repression during translational initiation and general transcription regulation. During miRNA-mediated repression the complex also seems to act as translational repressor during translational initiation. Additional complex functions may be a consequence of its influence on mRNA expression. In Xenopus laevis (African clawed frog), this protein is CCR4-NOT transcription complex subunit 7 (cnot7).